The following is a 252-amino-acid chain: Pantothenate synthetase (252 aa).

Residue 29–36 (MGNLHAGH) participates in ATP binding. Residue H36 is the Proton donor of the active site. Q60 is a binding site for (R)-pantoate. Residue Q60 participates in beta-alanine binding. 146 to 149 (GEKD) is a binding site for ATP. Q152 contributes to the (R)-pantoate binding site. ATP is bound by residues V175 and 183–186 (CSSR).

This sequence belongs to the pantothenate synthetase family. As to quaternary structure, homodimer.

The protein localises to the cytoplasm. It catalyses the reaction (R)-pantoate + beta-alanine + ATP = (R)-pantothenate + AMP + diphosphate + H(+). It functions in the pathway cofactor biosynthesis; (R)-pantothenate biosynthesis; (R)-pantothenate from (R)-pantoate and beta-alanine: step 1/1. In terms of biological role, catalyzes the condensation of pantoate with beta-alanine in an ATP-dependent reaction via a pantoyl-adenylate intermediate. The polypeptide is Pantothenate synthetase (Legionella pneumophila subsp. pneumophila (strain Philadelphia 1 / ATCC 33152 / DSM 7513)).